Here is a 368-residue protein sequence, read N- to C-terminus: Probable endopolygalacturonase I (368 aa).

The signal sequence occupies residues 1-18 (MRSVEILGLAALGSLVAA). A propeptide spanning residues 19–31 (APSPSRVSNSAKK) is cleaved from the precursor. Cysteine 35 and cysteine 50 form a disulfide bridge. PbH1 repeat units lie at residues 162 to 192 (ATNL…DIGE) and 193 to 214 (SNGV…AINS). Residue aspartate 207 is the Proton donor of the active site. A disulfide bridge links cysteine 209 with cysteine 225. Histidine 229 is a catalytic residue. 3 PbH1 repeats span residues 244–265 (VKNV…RIKT), 273–295 (VGDV…VIEQ), and 307–328 (TTGV…ASNA). An N-linked (GlcNAc...) asparagine glycan is attached at asparagine 246. Disulfide bonds link cysteine 335-cysteine 340 and cysteine 359-cysteine 368.

Belongs to the glycosyl hydrolase 28 family.

The protein resides in the secreted. The catalysed reaction is (1,4-alpha-D-galacturonosyl)n+m + H2O = (1,4-alpha-D-galacturonosyl)n + (1,4-alpha-D-galacturonosyl)m.. Its function is as follows. Involved in maceration and soft-rotting of plant tissue. Hydrolyzes the 1,4-alpha glycosidic bonds of de-esterified pectate in the smooth region of the plant cell wall. This chain is Probable endopolygalacturonase I (pgaI), found in Aspergillus clavatus (strain ATCC 1007 / CBS 513.65 / DSM 816 / NCTC 3887 / NRRL 1 / QM 1276 / 107).